A 79-amino-acid polypeptide reads, in one-letter code: Sulfur carrier protein TusA (79 aa).

The Cysteine persulfide intermediate role is filled by cysteine 17.

Belongs to the sulfur carrier protein TusA family.

It localises to the cytoplasm. In terms of biological role, sulfur carrier protein which probably makes part of a sulfur-relay system. This is Sulfur carrier protein TusA from Actinobacillus pleuropneumoniae serotype 5b (strain L20).